We begin with the raw amino-acid sequence, 741 residues long: Alpha-1,6-mannosylglycoprotein 6-beta-N-acetylglucosaminyltransferase A (741 aa).

Residues 1–13 (MALFTPWKLSSQK) lie on the Cytoplasmic side of the membrane. A helical; Signal-anchor for type II membrane protein membrane pass occupies residues 14 to 30 (LGFFLVTFGFIWGMMLL). The Lumenal portion of the chain corresponds to 31–741 (HFTIQQRTQP…GQVALCKDCL (711 aa)). Residues asparagine 110, asparagine 115, and asparagine 118 are each glycosylated (N-linked (GlcNAc...) asparagine). 9 disulfides stabilise this stretch: cysteine 145–cysteine 183, cysteine 156–cysteine 196, cysteine 172–cysteine 338, cysteine 372–cysteine 626, cysteine 649–cysteine 724, cysteine 653–cysteine 726, cysteine 660–cysteine 713, cysteine 681–cysteine 702, and cysteine 737–cysteine 740. Positions 213–741 (NSLAEIRTDF…GQVALCKDCL (529 aa)) are sufficient for catalytic activity. An important for activity in FGF2 release region spans residues 264 to 269 (KRKRKK). The N-linked (GlcNAc...) asparagine glycan is linked to asparagine 334. 378–379 (DS) lines the substrate pocket. Residues asparagine 433 and asparagine 447 are each glycosylated (N-linked (GlcNAc...) asparagine). Residue glutamate 526 participates in UDP-N-acetyl-alpha-D-glucosamine binding. Position 554 (lysine 554) interacts with substrate.

It belongs to the glycosyltransferase 18 family. In terms of processing, N-glycosylated. Post-translationally, a secreted form is released from the membrane after cleavage by gamma-secretase.

The protein resides in the golgi apparatus membrane. It localises to the secreted. It carries out the reaction N(4)-{beta-D-GlcNAc-(1-&gt;2)-[beta-D-GlcNAc-(1-&gt;4)]-alpha-D-Man-(1-&gt;3)-[beta-D-GlcNAc-(1-&gt;2)-alpha-D-Man-(1-&gt;6)]-beta-D-Man-(1-&gt;4)-beta-D-GlcNAc-(1-&gt;4)-beta-D-GlcNAc}-L-asparaginyl-[protein] + UDP-N-acetyl-alpha-D-glucosamine = N(4)-{beta-D-GlcNAc-(1-&gt;2)-[beta-D-GlcNAc-(1-&gt;4)]-alpha-D-Man-(1-&gt;3)-[beta-D-GlcNAc-(1-&gt;2)-[beta-D-GlcNAc-(1-&gt;6)]-alpha-D-Man-(1-&gt;6)]-beta-D-Man-(1-&gt;4)-beta-D-GlcNAc-(1-&gt;4)-beta-D-GlcNAc}-L-asparaginyl-[protein] + UDP + H(+). Its pathway is protein modification; protein glycosylation. With respect to regulation, activity is increased by Mn(2+) and Mg(2+). Its function is as follows. Catalyzes the addition of N-acetylglucosamine (GlcNAc) in beta 1-6 linkage to the alpha-linked mannose of biantennary N-linked oligosaccharides. Catalyzes an important step in the biosynthesis of branched, complex-type N-glycans, such as those found on EGFR, TGFR (TGF-beta receptor) and CDH2. Via its role in the biosynthesis of complex N-glycans, plays an important role in the activation of cellular signaling pathways, reorganization of the actin cytoskeleton, cell-cell adhesion and cell migration. MGAT5-dependent EGFR N-glycosylation enhances the interaction between EGFR and LGALS3 and thereby prevents rapid EGFR endocytosis and prolongs EGFR signaling. Required for efficient interaction between TGFB1 and its receptor. Enhances activation of intracellular signaling pathways by several types of growth factors, including FGF2, PDGF, IGF, TGFB1 and EGF. MGAT5-dependent CDH2 N-glycosylation inhibits CDH2-mediated homotypic cell-cell adhesion and contributes to the regulation of downstream signaling pathways. Promotes cell migration. Contributes to the regulation of the inflammatory response. MGAT5-dependent TCR N-glycosylation enhances the interaction between TCR and LGALS3, limits agonist-induced TCR clustering, and thereby dampens TCR-mediated responses to antigens. Required for normal leukocyte evasation and accumulation at sites of inflammation. Inhibits attachment of monocytes to the vascular endothelium and subsequent monocyte diapedesis. In terms of biological role, promotes proliferation of umbilical vein endothelial cells and angiogenesis, at least in part by promoting the release of the growth factor FGF2 from the extracellular matrix. This Homo sapiens (Human) protein is Alpha-1,6-mannosylglycoprotein 6-beta-N-acetylglucosaminyltransferase A (MGAT5).